A 220-amino-acid polypeptide reads, in one-letter code: Large ribosomal subunit protein uL3 (220 aa).

Residues 61–81 (KGSKSNKYANKPAEGHAKKAD) form a disordered region.

This sequence belongs to the universal ribosomal protein uL3 family. In terms of assembly, part of the 50S ribosomal subunit. Forms a cluster with proteins L14 and L19.

Functionally, one of the primary rRNA binding proteins, it binds directly near the 3'-end of the 23S rRNA, where it nucleates assembly of the 50S subunit. In Staphylococcus epidermidis (strain ATCC 12228 / FDA PCI 1200), this protein is Large ribosomal subunit protein uL3.